The chain runs to 60 residues: Potassium channel toxin MeuTXKalpha3 (60 aa).

The signal sequence occupies residues 1-22 (MKNYCGIITLFLAIISATGVFC). 3 disulfide bridges follow: cysteine 32-cysteine 50, cysteine 37-cysteine 55, and cysteine 41-cysteine 57. Proline 59 is subject to Proline amide.

It belongs to the short scorpion toxin superfamily. Potassium channel inhibitor family. As to expression, expressed by the venom gland.

The protein localises to the secreted. In terms of biological role, may block voltage-gated potassium channels (Kv). The chain is Potassium channel toxin MeuTXKalpha3 from Mesobuthus eupeus (Lesser Asian scorpion).